The primary structure comprises 540 residues: Thiamine biosynthetic bifunctional enzyme (540 aa).

The interval 1–238 (MVFTKEEVDY…LDATRYQFVE (238 aa)) is thiamine-phosphate synthase. Residues 43-47 (QIREK) and N75 contribute to the 4-amino-2-methyl-5-(diphosphooxymethyl)pyrimidine site. Mg(2+) contacts are provided by D76 and D95. Residue S114 coordinates 4-amino-2-methyl-5-(diphosphooxymethyl)pyrimidine. 143 to 145 (TST) is a 2-[(2R,5Z)-2-carboxy-4-methylthiazol-5(2H)-ylidene]ethyl phosphate binding site. K146 is a binding site for 4-amino-2-methyl-5-(diphosphooxymethyl)pyrimidine. Residues G181 and 209-210 (VS) each bind 2-[(2R,5Z)-2-carboxy-4-methylthiazol-5(2H)-ylidene]ethyl phosphate. The segment at 239-540 (CELNNTFPTT…KWSASLKKFK (302 aa)) is hydroxyethylthiazole kinase. A 5-(2-hydroxyethyl)-4-methylthiazole-binding site is contributed by M290. Residues K365 and T415 each contribute to the ATP site. A462 is a binding site for 5-(2-hydroxyethyl)-4-methylthiazole. C465 serves as the catalytic Proton acceptor; for hydroxyethylthiazole kinase activity.

This sequence in the N-terminal section; belongs to the thiamine-phosphate synthase family. The protein in the C-terminal section; belongs to the Thz kinase family. In terms of assembly, homooctamer. Mg(2+) is required as a cofactor.

The enzyme catalyses 2-[(2R,5Z)-2-carboxy-4-methylthiazol-5(2H)-ylidene]ethyl phosphate + 4-amino-2-methyl-5-(diphosphooxymethyl)pyrimidine + 2 H(+) = thiamine phosphate + CO2 + diphosphate. It catalyses the reaction 2-(2-carboxy-4-methylthiazol-5-yl)ethyl phosphate + 4-amino-2-methyl-5-(diphosphooxymethyl)pyrimidine + 2 H(+) = thiamine phosphate + CO2 + diphosphate. It carries out the reaction 4-methyl-5-(2-phosphooxyethyl)-thiazole + 4-amino-2-methyl-5-(diphosphooxymethyl)pyrimidine + H(+) = thiamine phosphate + diphosphate. The catalysed reaction is 5-(2-hydroxyethyl)-4-methylthiazole + ATP = 4-methyl-5-(2-phosphooxyethyl)-thiazole + ADP + H(+). Its pathway is cofactor biosynthesis; thiamine diphosphate biosynthesis; 4-methyl-5-(2-phosphoethyl)-thiazole from 5-(2-hydroxyethyl)-4-methylthiazole: step 1/1. It functions in the pathway cofactor biosynthesis; thiamine diphosphate biosynthesis; thiamine phosphate from 4-amino-2-methyl-5-diphosphomethylpyrimidine and 4-methyl-5-(2-phosphoethyl)-thiazole: step 1/1. Functionally, essential for thiamine biosynthesis. The kinase activity is involved in the salvage synthesis of TH-P from the thiazole. Condenses 4-methyl-5-(beta-hydroxyethyl)thiazole monophosphate (THZ-P) and 2-methyl-4-amino-5-hydroxymethyl pyrimidine pyrophosphate (HMP-PP) to form thiamine monophosphate (TMP). The sequence is that of Thiamine biosynthetic bifunctional enzyme (THI6) from Saccharomyces cerevisiae (strain ATCC 204508 / S288c) (Baker's yeast).